The chain runs to 433 residues: Tol-Pal system protein TolB (433 aa).

An N-terminal signal peptide occupies residues methionine 1–alanine 21.

This sequence belongs to the TolB family. The Tol-Pal system is composed of five core proteins: the inner membrane proteins TolA, TolQ and TolR, the periplasmic protein TolB and the outer membrane protein Pal. They form a network linking the inner and outer membranes and the peptidoglycan layer.

It is found in the periplasm. Its function is as follows. Part of the Tol-Pal system, which plays a role in outer membrane invagination during cell division and is important for maintaining outer membrane integrity. This chain is Tol-Pal system protein TolB, found in Pseudomonas fluorescens (strain SBW25).